A 150-amino-acid polypeptide reads, in one-letter code: Small ribosomal subunit protein uS11z (150 aa).

Phosphoserine is present on Ser-19.

Belongs to the universal ribosomal protein uS11 family. As to quaternary structure, interacts with AAK6.

It localises to the cytoplasm. The chain is Small ribosomal subunit protein uS11z (RPS14A) from Arabidopsis thaliana (Mouse-ear cress).